The sequence spans 139 residues: Nucleoside diphosphate kinase (139 aa).

Residues Lys-9, Phe-57, Arg-85, Thr-91, Arg-102, and Asn-112 each contribute to the ATP site. The active-site Pros-phosphohistidine intermediate is His-115.

Belongs to the NDK family. As to quaternary structure, homotetramer. Mg(2+) serves as cofactor.

It is found in the cytoplasm. The catalysed reaction is a 2'-deoxyribonucleoside 5'-diphosphate + ATP = a 2'-deoxyribonucleoside 5'-triphosphate + ADP. It carries out the reaction a ribonucleoside 5'-diphosphate + ATP = a ribonucleoside 5'-triphosphate + ADP. Functionally, major role in the synthesis of nucleoside triphosphates other than ATP. The ATP gamma phosphate is transferred to the NDP beta phosphate via a ping-pong mechanism, using a phosphorylated active-site intermediate. The sequence is that of Nucleoside diphosphate kinase from Neorickettsia sennetsu (strain ATCC VR-367 / Miyayama) (Ehrlichia sennetsu).